Reading from the N-terminus, the 792-residue chain is LPS-assembly protein LptD (792 aa).

The signal sequence occupies residues 1 to 22 (MYRVLRLLPLPLSVAISLSALA).

Belongs to the LptD family. Component of the lipopolysaccharide transport and assembly complex. Interacts with LptE and LptA.

The protein resides in the cell outer membrane. Functionally, together with LptE, is involved in the assembly of lipopolysaccharide (LPS) at the surface of the outer membrane. The protein is LPS-assembly protein LptD of Xylella fastidiosa (strain Temecula1 / ATCC 700964).